The sequence spans 270 residues: Shikimate dehydrogenase (NADP(+)) (270 aa).

Residues 15–17 and Thr62 contribute to the shikimate site; that span reads SKS. The Proton acceptor role is filled by Lys66. Residues Asn87 and Asp102 each contribute to the shikimate site. NADP(+) contacts are provided by residues 127-131, 151-156, and Met214; these read GAGGA and NRTVAR. Tyr216 contributes to the shikimate binding site. Gly238 contacts NADP(+).

Belongs to the shikimate dehydrogenase family. Homodimer.

The catalysed reaction is shikimate + NADP(+) = 3-dehydroshikimate + NADPH + H(+). It functions in the pathway metabolic intermediate biosynthesis; chorismate biosynthesis; chorismate from D-erythrose 4-phosphate and phosphoenolpyruvate: step 4/7. Functionally, involved in the biosynthesis of the chorismate, which leads to the biosynthesis of aromatic amino acids. Catalyzes the reversible NADPH linked reduction of 3-dehydroshikimate (DHSA) to yield shikimate (SA). The chain is Shikimate dehydrogenase (NADP(+)) from Alkalilimnicola ehrlichii (strain ATCC BAA-1101 / DSM 17681 / MLHE-1).